The chain runs to 300 residues: uncharacterized protein (300 aa).

This is an uncharacterized protein from Methanocaldococcus jannaschii (strain ATCC 43067 / DSM 2661 / JAL-1 / JCM 10045 / NBRC 100440) (Methanococcus jannaschii).